The sequence spans 360 residues: Protein RecA (360 aa).

Residue 64-71 coordinates ATP; that stretch reads GHESSGKT. Residues 333 to 360 are disordered; that stretch reads QEQVQPEPKSKQSKSKQASEQATQDELI.

It belongs to the RecA family.

It localises to the cytoplasm. In terms of biological role, can catalyze the hydrolysis of ATP in the presence of single-stranded DNA, the ATP-dependent uptake of single-stranded DNA by duplex DNA, and the ATP-dependent hybridization of homologous single-stranded DNAs. It interacts with LexA causing its activation and leading to its autocatalytic cleavage. In Francisella philomiragia subsp. philomiragia (strain ATCC 25017 / CCUG 19701 / FSC 153 / O#319-036), this protein is Protein RecA.